A 122-amino-acid chain; its full sequence is NADH-quinone oxidoreductase subunit A (122 aa).

The next 3 helical transmembrane spans lie at 10–30 (MIVG…LTLG), 66–86 (IFAL…PWAV), and 91–111 (LGLF…IGLA).

This sequence belongs to the complex I subunit 3 family. NDH-1 is composed of 14 different subunits. Subunits NuoA, H, J, K, L, M, N constitute the membrane sector of the complex.

It localises to the cell membrane. The enzyme catalyses a quinone + NADH + 5 H(+)(in) = a quinol + NAD(+) + 4 H(+)(out). Its function is as follows. NDH-1 shuttles electrons from NADH, via FMN and iron-sulfur (Fe-S) centers, to quinones in the respiratory chain. The immediate electron acceptor for the enzyme in this species is believed to be a menaquinone. Couples the redox reaction to proton translocation (for every two electrons transferred, four hydrogen ions are translocated across the cytoplasmic membrane), and thus conserves the redox energy in a proton gradient. This chain is NADH-quinone oxidoreductase subunit A, found in Bacillus cytotoxicus (strain DSM 22905 / CIP 110041 / 391-98 / NVH 391-98).